The chain runs to 450 residues: Tubulin alpha-1 chain (450 aa).

GTP-binding residues include glutamine 11, glutamate 71, glycine 144, threonine 145, threonine 179, asparagine 206, and asparagine 228. Glutamate 71 contacts Mg(2+). The active site involves glutamate 254.

The protein belongs to the tubulin family. Dimer of alpha and beta chains. A typical microtubule is a hollow water-filled tube with an outer diameter of 25 nm and an inner diameter of 15 nM. Alpha-beta heterodimers associate head-to-tail to form protofilaments running lengthwise along the microtubule wall with the beta-tubulin subunit facing the microtubule plus end conferring a structural polarity. Microtubules usually have 13 protofilaments but different protofilament numbers can be found in some organisms and specialized cells. The cofactor is Mg(2+). Undergoes a tyrosination/detyrosination cycle, the cyclic removal and re-addition of a C-terminal tyrosine residue by the enzymes tubulin tyrosine carboxypeptidase (TTCP) and tubulin tyrosine ligase (TTL), respectively.

The protein resides in the cytoplasm. Its subcellular location is the cytoskeleton. It catalyses the reaction GTP + H2O = GDP + phosphate + H(+). Tubulin is the major constituent of microtubules, a cylinder consisting of laterally associated linear protofilaments composed of alpha- and beta-tubulin heterodimers. Microtubules grow by the addition of GTP-tubulin dimers to the microtubule end, where a stabilizing cap forms. Below the cap, tubulin dimers are in GDP-bound state, owing to GTPase activity of alpha-tubulin. The sequence is that of Tubulin alpha-1 chain (TUBA1) from Hordeum vulgare (Barley).